The sequence spans 366 residues: tRNA(Met) cytidine acetate ligase (366 aa).

ATP is bound by residues 7-20 (IAEF…HKYL), Gly-96, Asn-152, and Arg-175.

This sequence belongs to the TmcAL family.

Its subcellular location is the cytoplasm. It catalyses the reaction cytidine(34) in elongator tRNA(Met) + acetate + ATP = N(4)-acetylcytidine(34) in elongator tRNA(Met) + AMP + diphosphate. In terms of biological role, catalyzes the formation of N(4)-acetylcytidine (ac(4)C) at the wobble position of elongator tRNA(Met), using acetate and ATP as substrates. First activates an acetate ion to form acetyladenylate (Ac-AMP) and then transfers the acetyl group to tRNA to form ac(4)C34. The chain is tRNA(Met) cytidine acetate ligase from Streptococcus mutans serotype c (strain ATCC 700610 / UA159).